We begin with the raw amino-acid sequence, 447 residues long: MGQNFHAFMFPWFAFGHMTPYLHLANKLAAKGHRVTFLLPKKAQKQLEHHNLFPDRIIFHSLTIPHVDGLPAGAETASDIPISLGKFLTAAMDLTRDQVEAAVRALRPDLIFFDTAYWVPEMAKEHRVKSVIYFVISANSIAHELVPGGELGVPPPGYPSSKVLYRGHDAHALLTFSIFYERLHYRITTGLKNCDFISIRTCKEIEGKFCDYIERQYQRKVLLTGPMLPEPDNSRPLEDRWNHWLNQFKPGSVIYCALGSQITLEKDQFQELCLGMELTGLPFLVAVKPPKGAKTIQEALPEGFEERVKNHGVVWGEWVQQPLILAHPSVGCFVTHCGFGSMWESLVSDCQIVLLPYLCDQILNTRLMSEELEVSVEVKREETGWFSKESLSVAITSVMDKDSELGNLVRRNHAKLKEVLVSPGLLTGYTDEFVETLQNIVNDTNLE.

Residues Ser260, Val319 to Gln321, His336 to Glu344, and Leu358 to Gln361 contribute to the UDP-alpha-D-glucose site.

Belongs to the UDP-glycosyltransferase family.

The protein is UDP-glycosyltransferase 79B9 (UGT79B9) of Arabidopsis thaliana (Mouse-ear cress).